The sequence spans 401 residues: Enoyl-[acyl-carrier-protein] reductase [NADH] 1 (401 aa).

NAD(+) is bound by residues 48–53 (GSSSGY), 74–75 (FE), 111–112 (DA), and 139–140 (LA). Y225 lines the substrate pocket. Catalysis depends on Y235, which acts as the Proton donor. NAD(+) contacts are provided by residues K244 and 273 to 275 (VVT).

This sequence belongs to the TER reductase family. In terms of assembly, monomer.

The catalysed reaction is a 2,3-saturated acyl-[ACP] + NAD(+) = a (2E)-enoyl-[ACP] + NADH + H(+). It catalyses the reaction a 2,3-saturated acyl-CoA + NAD(+) = a (2E)-enoyl-CoA + NADH + H(+). The enzyme catalyses (2E)-butenoyl-[ACP] + NADH + H(+) = butanoyl-[ACP] + NAD(+). It carries out the reaction butanoyl-CoA + NAD(+) = (2E)-butenoyl-CoA + NADH + H(+). Its pathway is lipid metabolism; fatty acid biosynthesis. With respect to regulation, weakly inhibited by triclosan. Involved in the final reduction of the elongation cycle of fatty acid synthesis (FAS II). Catalyzes the NADH-dependent reduction of a carbon-carbon double bond in an enoyl moiety that is covalently linked to an acyl carrier protein (ACP). It can use both crotonyl-CoA and crotonyl-ACP. This is Enoyl-[acyl-carrier-protein] reductase [NADH] 1 from Vibrio cholerae serotype O1 (strain ATCC 39315 / El Tor Inaba N16961).